Reading from the N-terminus, the 188-residue chain is Putative protein SSX9 (188 aa).

Positions lysine 20 to aspartate 83 constitute a KRAB-related domain. Positions lysine 114–threonine 165 are disordered. A compositionally biased stretch (basic and acidic residues) spans lysine 115–proline 127. Serine 123 is modified (phosphoserine). The segment covering glycine 156–threonine 165 has biased composition (basic residues).

This sequence belongs to the SSX family. In terms of tissue distribution, not detected in any normal or tumor tissues.

In terms of biological role, could act as a modulator of transcription. The protein is Putative protein SSX9 of Homo sapiens (Human).